The primary structure comprises 126 residues: Large ribosomal subunit protein bL17 (126 aa).

This sequence belongs to the bacterial ribosomal protein bL17 family. As to quaternary structure, part of the 50S ribosomal subunit. Contacts protein L32.

The sequence is that of Large ribosomal subunit protein bL17 from Laribacter hongkongensis (strain HLHK9).